We begin with the raw amino-acid sequence, 428 residues long: Adenylosuccinate synthetase (428 aa).

GTP is bound by residues 12 to 18 and 40 to 42; these read GDEGKGK and GHT. The active-site Proton acceptor is the Asp13. Positions 13 and 40 each coordinate Mg(2+). Residues 13-16, 38-41, Thr129, Arg143, Gln224, Thr239, and Arg303 contribute to the IMP site; these read DEGK and NAGH. His41 functions as the Proton donor in the catalytic mechanism. 299-305 serves as a coordination point for substrate; sequence VTTGRIR. GTP-binding positions include Arg305, 331–333, and 410–412; these read KVD and AYG.

This sequence belongs to the adenylosuccinate synthetase family. In terms of assembly, homodimer. Requires Mg(2+) as cofactor.

It localises to the cytoplasm. It carries out the reaction IMP + L-aspartate + GTP = N(6)-(1,2-dicarboxyethyl)-AMP + GDP + phosphate + 2 H(+). The protein operates within purine metabolism; AMP biosynthesis via de novo pathway; AMP from IMP: step 1/2. Its function is as follows. Plays an important role in the de novo pathway of purine nucleotide biosynthesis. Catalyzes the first committed step in the biosynthesis of AMP from IMP. This chain is Adenylosuccinate synthetase, found in Francisella tularensis subsp. novicida (strain U112).